Here is a 464-residue protein sequence, read N- to C-terminus: Cysteine--tRNA ligase (464 aa).

C32 contributes to the Zn(2+) binding site. The 'HIGH' region signature appears at 34 to 44 (VTVYDDCHIGH). Positions 213, 238, and 242 each coordinate Zn(2+). A 'KMSKS' region motif is present at residues 270 to 274 (KMSKS). K273 contacts ATP.

Belongs to the class-I aminoacyl-tRNA synthetase family. Monomer. Requires Zn(2+) as cofactor.

It localises to the cytoplasm. The catalysed reaction is tRNA(Cys) + L-cysteine + ATP = L-cysteinyl-tRNA(Cys) + AMP + diphosphate. This Francisella tularensis subsp. holarctica (strain LVS) protein is Cysteine--tRNA ligase.